Here is a 241-residue protein sequence, read N- to C-terminus: Biosynthetic peptidoglycan transglycosylase (241 aa).

Residues 18-38 (GVIGIIALWMAGILIFAFLPV) form a helical membrane-spanning segment.

This sequence belongs to the glycosyltransferase 51 family.

Its subcellular location is the cell inner membrane. It carries out the reaction [GlcNAc-(1-&gt;4)-Mur2Ac(oyl-L-Ala-gamma-D-Glu-L-Lys-D-Ala-D-Ala)](n)-di-trans,octa-cis-undecaprenyl diphosphate + beta-D-GlcNAc-(1-&gt;4)-Mur2Ac(oyl-L-Ala-gamma-D-Glu-L-Lys-D-Ala-D-Ala)-di-trans,octa-cis-undecaprenyl diphosphate = [GlcNAc-(1-&gt;4)-Mur2Ac(oyl-L-Ala-gamma-D-Glu-L-Lys-D-Ala-D-Ala)](n+1)-di-trans,octa-cis-undecaprenyl diphosphate + di-trans,octa-cis-undecaprenyl diphosphate + H(+). Its pathway is cell wall biogenesis; peptidoglycan biosynthesis. Its function is as follows. Peptidoglycan polymerase that catalyzes glycan chain elongation from lipid-linked precursors. The protein is Biosynthetic peptidoglycan transglycosylase of Yersinia pestis bv. Antiqua (strain Antiqua).